Here is a 433-residue protein sequence, read N- to C-terminus: Trigger factor (433 aa).

In terms of domain architecture, PPIase FKBP-type spans G163–P248.

This sequence belongs to the FKBP-type PPIase family. Tig subfamily.

Its subcellular location is the cytoplasm. The enzyme catalyses [protein]-peptidylproline (omega=180) = [protein]-peptidylproline (omega=0). Its function is as follows. Involved in protein export. Acts as a chaperone by maintaining the newly synthesized protein in an open conformation. Functions as a peptidyl-prolyl cis-trans isomerase. This Geobacter metallireducens (strain ATCC 53774 / DSM 7210 / GS-15) protein is Trigger factor.